A 509-amino-acid polypeptide reads, in one-letter code: tRNA (guanine(37)-N(1))-methyltransferase (509 aa).

S-adenosyl-L-methionine contacts are provided by residues H289, 327 to 328, 355 to 356, and N387; these read DL and DG. Residues 478-509 are disordered; that stretch reads TRNPENHEDPPLKRQRTAEAFSDEKTQIVSNT.

This sequence belongs to the class I-like SAM-binding methyltransferase superfamily. TRM5/TYW2 family. As to quaternary structure, monomer.

It localises to the mitochondrion matrix. The protein localises to the nucleus. Its subcellular location is the cytoplasm. The enzyme catalyses guanosine(37) in tRNA + S-adenosyl-L-methionine = N(1)-methylguanosine(37) in tRNA + S-adenosyl-L-homocysteine + H(+). Involved in mitochondrial tRNA methylation. Specifically methylates the N1 position of guanosine-37 in various tRNAs. Methylation is not dependent on the nature of the nucleoside 5' of the target nucleoside. This is the first step in the biosynthesis of wybutosine (yW), a modified base adjacent to the anticodon of tRNAs and required for accurate decoding. In Homo sapiens (Human), this protein is tRNA (guanine(37)-N(1))-methyltransferase.